We begin with the raw amino-acid sequence, 259 residues long: Haloacid dehalogenase-like hydrolase domain-containing protein 2 (259 aa).

Residues Asp13 and Ser15 each contribute to the Mg(2+) site. Substrate-binding positions include 13-15 (DLS) and 46-47 (TN). Residues 47–71 (NTTKESKQDLLERLRKLEFDISEDE) adopt a coiled-coil conformation. Lys50 is subject to N6-succinyllysine. Lys179 provides a ligand contact to substrate. Asp204 is a binding site for Mg(2+).

Belongs to the HAD-like hydrolase superfamily. It depends on Mg(2+) as a cofactor.

The chain is Haloacid dehalogenase-like hydrolase domain-containing protein 2 (HDHD2) from Pongo abelii (Sumatran orangutan).